A 70-amino-acid chain; its full sequence is Toxin Boma6d (70 aa).

The LCN-type CS-alpha/beta domain occupies 2 to 68 (RDAYIAQNYN…VPIKVEGKCH (67 aa)). Intrachain disulfides connect Cys12–Cys67, Cys16–Cys40, Cys22–Cys50, and Cys26–Cys52.

The protein belongs to the long (4 C-C) scorpion toxin superfamily. Sodium channel inhibitor family. Alpha subfamily. Expressed by the venom gland.

The protein localises to the secreted. Alpha toxins bind voltage-independently at site-3 of sodium channels (Nav) and inhibit the inactivation of the activated channels, thereby blocking neuronal transmission. This chain is Toxin Boma6d, found in Buthus occitanus mardochei (Moroccan scorpion).